Reading from the N-terminus, the 317-residue chain is Acetyl-coenzyme A carboxylase carboxyl transferase subunit alpha (317 aa).

In terms of domain architecture, CoA carboxyltransferase C-terminal spans 39-293; that stretch reads RLKKKSISLT…KTSLAQGVAE (255 aa).

It belongs to the AccA family. As to quaternary structure, acetyl-CoA carboxylase is a heterohexamer composed of biotin carboxyl carrier protein (AccB), biotin carboxylase (AccC) and two subunits each of ACCase subunit alpha (AccA) and ACCase subunit beta (AccD).

The protein localises to the cytoplasm. The catalysed reaction is N(6)-carboxybiotinyl-L-lysyl-[protein] + acetyl-CoA = N(6)-biotinyl-L-lysyl-[protein] + malonyl-CoA. The protein operates within lipid metabolism; malonyl-CoA biosynthesis; malonyl-CoA from acetyl-CoA: step 1/1. Component of the acetyl coenzyme A carboxylase (ACC) complex. First, biotin carboxylase catalyzes the carboxylation of biotin on its carrier protein (BCCP) and then the CO(2) group is transferred by the carboxyltransferase to acetyl-CoA to form malonyl-CoA. This Marinobacter nauticus (strain ATCC 700491 / DSM 11845 / VT8) (Marinobacter aquaeolei) protein is Acetyl-coenzyme A carboxylase carboxyl transferase subunit alpha.